Reading from the N-terminus, the 214-residue chain is Leucyl/phenylalanyl-tRNA--protein transferase (214 aa).

It belongs to the L/F-transferase family.

The protein localises to the cytoplasm. The catalysed reaction is N-terminal L-lysyl-[protein] + L-leucyl-tRNA(Leu) = N-terminal L-leucyl-L-lysyl-[protein] + tRNA(Leu) + H(+). It catalyses the reaction N-terminal L-arginyl-[protein] + L-leucyl-tRNA(Leu) = N-terminal L-leucyl-L-arginyl-[protein] + tRNA(Leu) + H(+). It carries out the reaction L-phenylalanyl-tRNA(Phe) + an N-terminal L-alpha-aminoacyl-[protein] = an N-terminal L-phenylalanyl-L-alpha-aminoacyl-[protein] + tRNA(Phe). Functions in the N-end rule pathway of protein degradation where it conjugates Leu, Phe and, less efficiently, Met from aminoacyl-tRNAs to the N-termini of proteins containing an N-terminal arginine or lysine. The polypeptide is Leucyl/phenylalanyl-tRNA--protein transferase (Cereibacter sphaeroides (strain ATCC 17023 / DSM 158 / JCM 6121 / CCUG 31486 / LMG 2827 / NBRC 12203 / NCIMB 8253 / ATH 2.4.1.) (Rhodobacter sphaeroides)).